A 496-amino-acid chain; its full sequence is Glutamate--cysteine ligase B, chloroplastic (496 aa).

A chloroplast-targeting transit peptide spans 1-34 (MAVASRLAVARVAPDGGAAGRRRRRRGRPVVAVP). The segment at 14-53 (PDGGAAGRRRRRRGRPVVAVPTAAGRGRGRGGAVAASPPT) is disordered. The segment covering 29–38 (PVVAVPTAAG) has biased composition (low complexity). Cys-160 and Cys-380 are oxidised to a cystine.

Belongs to the carboxylate-amine ligase family. Glutamate--cysteine ligase type 2 subfamily. In terms of assembly, homodimer or monomer when oxidized or reduced, respectively. In terms of processing, the Cys-160-Cys-380 disulfide bridge is known to modulate the enzyme activity according to the redox status. The oxidized form constitutes the active enzyme.

The protein localises to the plastid. Its subcellular location is the chloroplast. It carries out the reaction L-cysteine + L-glutamate + ATP = gamma-L-glutamyl-L-cysteine + ADP + phosphate + H(+). The protein operates within sulfur metabolism; glutathione biosynthesis; glutathione from L-cysteine and L-glutamate: step 1/2. This Oryza sativa subsp. japonica (Rice) protein is Glutamate--cysteine ligase B, chloroplastic (GSH1-2).